The following is a 464-amino-acid chain: Antithrombin-III (464 aa).

The first 32 residues, 1–32, serve as a signal peptide directing secretion; the sequence is MYSNVIGTVTSGKRKVYLLSLLLIGFWDCVTC. Intrachain disulfides connect Cys-40-Cys-160 and Cys-53-Cys-127. Thr-63 is subject to Phosphothreonine; by FAM20C. The residue at position 68 (Ser-68) is a Phosphoserine; by FAM20C. Residue Trp-81 coordinates heparin. Asn-128 carries an N-linked (GlcNAc...) asparagine glycan. Arg-161 is a heparin binding site. A glycan (N-linked (GlcNAc...) asparagine) is linked at Asn-167. Arg-177 is a heparin binding site. An N-linked (GlcNAc...) (complex) asparagine glycan is attached at Asn-187. Residue Asn-224 is glycosylated (N-linked (GlcNAc...) asparagine). Cys-279 and Cys-462 are disulfide-bonded.

The protein belongs to the serpin family. Forms protease inhibiting heterodimer with TMPRSS7. In terms of processing, phosphorylated by FAM20C in the extracellular medium. As to expression, found in plasma.

The protein localises to the secreted. It is found in the extracellular space. In terms of biological role, most important serine protease inhibitor in plasma that regulates the blood coagulation cascade. AT-III inhibits thrombin, matriptase-3/TMPRSS7, as well as factors IXa, Xa and XIa. Its inhibitory activity is greatly enhanced in the presence of heparin. The sequence is that of Antithrombin-III (SERPINC1) from Homo sapiens (Human).